A 1135-amino-acid polypeptide reads, in one-letter code: LRR receptor-like serine/threonine-protein kinase RGI2 (1135 aa).

Positions 1-35 are cleaved as a signal peptide; that stretch reads MSLQMPIPRKKALTVSHFSITLSLFLAFFISSTSA. Over 36 to 723 the chain is Extracellular; it reads STNEVSALIS…QRGVHSHRLR (688 aa). A disulfide bridge links Cys-69 with Cys-76. Asn-101 and Asn-117 each carry an N-linked (GlcNAc...) asparagine glycan. LRR repeat units follow at residues 105–129, 130–153, 154–177, and 179–203; these read FTSLQKLVISNTNLTGAISSEIGDC, SELIVIDLSSNSLVGEIPSSLGKL, KNLQELCLNSNGLTGKIPPELGDC, and SLKNLEIFDNYLSENLPLELGKIST. 4 short sequence motifs (small peptide recognition) span residues 186-187, 208-211, 231-236, and Tyr-259; these read FD, RAGG, and VLGLAA. LRR repeat units follow at residues 226-250, 251-274, 276-298, 299-323, 325-345, 346-370, 372-395, 397-418, 419-442, 444-466, 467-490, 491-514, 516-538, 539-562, 564-586, 587-610, 612-634, 635-658, and 659-683; these read CRNLKVLGLAATKISGSLPVSLGQL, SKLQSLSVYSTMLSGEIPKELGNC, ELINLFLYDNDLSGTLPKELGKL, QNLEKMLLWQNNLHGPIPEEIGFMK, LNAIDLSMNYFSGTIPKSFGN, LSNLQELMLSSNNITGSIPSILSNC, KLVQFQIDANQISGLIPPEIGLLK, LNIFLGWQNKLEGNIPDELAGC, QNLQALDLSQNYLTGSLPAGLFQL, NLTKLLLISNAISGVIPLEIGNC, TSLVRLRLVNNRITGEIPKGIGFL, QNLSFLDLSENNLSGPVPLEISNC, QLQMLNLSNNTLQGYLPLSLSSL, TKLQVLDVSSNDLTGKIPDSLGHL, SLNRLILSKNSFNGEIPSSLGHC, TNLQLLDLSSNNISGTIPEELFDI, DLDIALNLSWNSLDGFIPERISA, LNRLSVLDISHNMLSGDLSALSGL, and ENLVSLNISHNRFSGYLPDSKVFRQ. Asn-273 carries an N-linked (GlcNAc...) asparagine glycan. The Small peptide recognition motif lies at 281-283; the sequence is FLY. Residues 329–332 carry the Small peptide recognition motif; it reads DLSM. Residue Asn-345 is glycosylated (N-linked (GlcNAc...) asparagine). A Small peptide recognition motif is present at residues 351 to 353; it reads ELM. Asn-358 and Asn-369 each carry an N-linked (GlcNAc...) asparagine glycan. 2 consecutive short sequence motifs (small peptide recognition) follow at residues 399–403 and 425–428; these read IFLGW and DLSQ. A glycan (N-linked (GlcNAc...) asparagine) is linked at Asn-444. Residues 447-451 carry the Small peptide recognition motif; sequence KLLLI. Residue Asn-465 is glycosylated (N-linked (GlcNAc...) asparagine). The Small peptide recognition signature appears at 471 to 473; sequence RLR. N-linked (GlcNAc...) asparagine glycans are attached at residues Asn-492, Asn-502, Asn-521, and Asn-524. N-linked (GlcNAc...) asparagine glycosylation is found at Asn-598 and Asn-618. N-linked (GlcNAc...) asparagine glycans are attached at residues Asn-665 and Asn-707. The chain crosses the membrane as a helical span at residues 724–744; that stretch reads IAIGLLISVTAVLAVLGVLAV. Topologically, residues 745–1135 are cytoplasmic; it reads IRAKQMIRDD…ATSNVRPNLK (391 aa). Residue Thr-777 is modified to Phosphothreonine. The Protein kinase domain maps to 785 to 1066; the sequence is LVEGNVIGKG…KDVAAMLSEI (282 aa). ATP-binding positions include 791 to 799 and Lys-813; that span reads IGKGCSGIV. Residues Tyr-868 and Tyr-907 each carry the phosphotyrosine modification. Asp-920 serves as the catalytic Proton acceptor. Phosphotyrosine occurs at positions 963 and 970. Residues 1077–1135 are disordered; that stretch reads DGCSGSCNNGRERGKDDSTSSVMQQTAKYLRSSSTSFSASSLLYSSSSSATSNVRPNLK. The segment covering 1108-1128 has biased composition (low complexity); it reads SSSTSFSASSLLYSSSSSATS.

It belongs to the protein kinase superfamily. Ser/Thr protein kinase family. Binds to RGF peptides such as RGF1, GLV5/CLEL1/RGF2, GLV7/CLEL3/RGF3, GLV3/RGF4, GLV10/CLEL7/RGF5 and RGF10/CLELN; these interactions trigger the formation of heterodimers with SERK1. Interacts with UBP13. Post-translationally, phosphorylated and ubiquitinated upon interaction with RGF1, thus leading to activation a subsequent degradation. Stabilized by UBP12 and UBP13-mediated deubiquitination. In terms of processing, autophosphorylated. In terms of tissue distribution, specific to root meristems, especially in lateral root meristems (LRM).

It is found in the membrane. The catalysed reaction is L-seryl-[protein] + ATP = O-phospho-L-seryl-[protein] + ADP + H(+). It catalyses the reaction L-threonyl-[protein] + ATP = O-phospho-L-threonyl-[protein] + ADP + H(+). Functionally, together with RGI1, RGI3, RGI4 and RGI5, acts as a receptor of RGF peptides (e.g. RGF1, GLV5/CLEL1/RGF2, GLV7/CLEL3/RGF3, GLV3/RGF4, GLV10/CLEL7/RGF5 and RGF10/CLELN), peptide hormones which maintain the postembryonic root stem cell niche by regulating the expression levels and patterns of the transcription factor PLETHORA (PLT, e.g. PLT1 and PLT2). Links RGF peptides signal with their downstream components. The chain is LRR receptor-like serine/threonine-protein kinase RGI2 from Arabidopsis thaliana (Mouse-ear cress).